The chain runs to 237 residues: Ribonuclease 3 (237 aa).

In terms of domain architecture, RNase III spans 5-136 (VDELSARLGV…VIAALFLDQG (132 aa)). Glu-49 lines the Mg(2+) pocket. Asp-53 is an active-site residue. 2 residues coordinate Mg(2+): Asp-122 and Glu-125. Residue Glu-125 is part of the active site. Residues 163-232 (DYKSRLQARI…ARAALDALEG (70 aa)) enclose the DRBM domain. Residues 185 to 208 (IDRSGPEHRPEFTVEVRAGEERLG) show a composition bias toward basic and acidic residues. The tract at residues 185-237 (IDRSGPEHRPEFTVEVRAGEERLGTGKGPSKQAAEQAAARAALDALEGGTDGR) is disordered. Residues 216 to 231 (QAAEQAAARAALDALE) show a composition bias toward low complexity.

It belongs to the ribonuclease III family. As to quaternary structure, homodimer. Requires Mg(2+) as cofactor.

The protein resides in the cytoplasm. The catalysed reaction is Endonucleolytic cleavage to 5'-phosphomonoester.. Functionally, digests double-stranded RNA. Involved in the processing of primary rRNA transcript to yield the immediate precursors to the large and small rRNAs (23S and 16S). Processes some mRNAs, and tRNAs when they are encoded in the rRNA operon. Processes pre-crRNA and tracrRNA of type II CRISPR loci if present in the organism. The chain is Ribonuclease 3 from Roseiflexus sp. (strain RS-1).